A 166-amino-acid chain; its full sequence is NADPH-dependent 7-cyano-7-deazaguanine reductase (166 aa).

Residue Cys57 is the Thioimide intermediate of the active site. Asp64 acts as the Proton donor in catalysis. Substrate is bound by residues 79 to 81 (VES) and 98 to 99 (HE).

The protein belongs to the GTP cyclohydrolase I family. QueF type 1 subfamily.

It localises to the cytoplasm. The catalysed reaction is 7-aminomethyl-7-carbaguanine + 2 NADP(+) = 7-cyano-7-deazaguanine + 2 NADPH + 3 H(+). It functions in the pathway tRNA modification; tRNA-queuosine biosynthesis. In terms of biological role, catalyzes the NADPH-dependent reduction of 7-cyano-7-deazaguanine (preQ0) to 7-aminomethyl-7-deazaguanine (preQ1). The chain is NADPH-dependent 7-cyano-7-deazaguanine reductase from Alkaliphilus metalliredigens (strain QYMF).